Here is a 517-residue protein sequence, read N- to C-terminus: 2-isopropylmalate synthase (517 aa).

Positions 5-267 (VIIFDTTLRD…HTNVRCQEIY (263 aa)) constitute a Pyruvate carboxyltransferase domain. Positions 14, 202, 204, and 238 each coordinate Mn(2+). The interval 392–517 (RLKCFHVDSS…QRKYIKKNNN (126 aa)) is regulatory domain.

Belongs to the alpha-IPM synthase/homocitrate synthase family. LeuA type 1 subfamily. Homodimer. The cofactor is Mn(2+).

Its subcellular location is the cytoplasm. The enzyme catalyses 3-methyl-2-oxobutanoate + acetyl-CoA + H2O = (2S)-2-isopropylmalate + CoA + H(+). It participates in amino-acid biosynthesis; L-leucine biosynthesis; L-leucine from 3-methyl-2-oxobutanoate: step 1/4. Functionally, catalyzes the condensation of the acetyl group of acetyl-CoA with 3-methyl-2-oxobutanoate (2-ketoisovalerate) to form 3-carboxy-3-hydroxy-4-methylpentanoate (2-isopropylmalate). The chain is 2-isopropylmalate synthase from Blochmanniella pennsylvanica (strain BPEN).